The following is a 293-amino-acid chain: ATP synthase gamma chain (293 aa).

It belongs to the ATPase gamma chain family. As to quaternary structure, F-type ATPases have 2 components, CF(1) - the catalytic core - and CF(0) - the membrane proton channel. CF(1) has five subunits: alpha(3), beta(3), gamma(1), delta(1), epsilon(1). CF(0) has three main subunits: a, b and c.

It localises to the cell inner membrane. Functionally, produces ATP from ADP in the presence of a proton gradient across the membrane. The gamma chain is believed to be important in regulating ATPase activity and the flow of protons through the CF(0) complex. The protein is ATP synthase gamma chain of Leptothrix cholodnii (strain ATCC 51168 / LMG 8142 / SP-6) (Leptothrix discophora (strain SP-6)).